A 118-amino-acid polypeptide reads, in one-letter code: Large ribosomal subunit protein uL22 (118 aa).

Belongs to the universal ribosomal protein uL22 family. As to quaternary structure, part of the 50S ribosomal subunit.

Functionally, this protein binds specifically to 23S rRNA; its binding is stimulated by other ribosomal proteins, e.g. L4, L17, and L20. It is important during the early stages of 50S assembly. It makes multiple contacts with different domains of the 23S rRNA in the assembled 50S subunit and ribosome. In terms of biological role, the globular domain of the protein is located near the polypeptide exit tunnel on the outside of the subunit, while an extended beta-hairpin is found that lines the wall of the exit tunnel in the center of the 70S ribosome. The sequence is that of Large ribosomal subunit protein uL22 from Nostoc punctiforme (strain ATCC 29133 / PCC 73102).